Consider the following 1009-residue polypeptide: Protein-tyrosine kinase 2-beta (1009 aa).

The FERM domain maps to 39–359; it reads RILKVCFYSN…GYCRLQGEHQ (321 aa). 3 positions are modified to phosphoserine: S361, S375, and S399. Y402 carries the post-translational modification Phosphotyrosine; by autocatalysis. A Protein kinase domain is found at 425–683; the sequence is VVLNRILGEG…ELVCSLSDVY (259 aa). ATP-binding positions include 431 to 439, K457, and 503 to 509; these read LGEGFFGEV and ELYPYGE. The Proton acceptor role is filled by D549. Position 579 is a phosphotyrosine (Y579). Y580 carries the phosphotyrosine; by SRC, FYN and LCK modification. A disordered region spans residues 701–725; the sequence is TPKILEPTAFQEPPPKPSRPKYRPP. Positions 712–725 are enriched in pro residues; it reads EPPPKPSRPKYRPP. A Phosphotyrosine modification is found at Y722. S762 carries the phosphoserine modification. Residue T765 is modified to Phosphothreonine. Residues 801-1009 are interaction with TGFB1I1; that stretch reads KVKMRQILDK…LANLAHPPAE (209 aa). 2 positions are modified to phosphotyrosine: Y819 and Y834. The residue at position 839 (S839) is a Phosphoserine. Residue T842 is modified to Phosphothreonine. The residue at position 849 (Y849) is a Phosphotyrosine. At S866 the chain carries Phosphoserine. Residues 868 to 1009 form a focal adhesion targeting (FAT) region; the sequence is QPTANLDRTD…LANLAHPPAE (142 aa). Residue Y881 is modified to Phosphotyrosine; by SRC.

It belongs to the protein kinase superfamily. Tyr protein kinase family. FAK subfamily. In terms of assembly, homodimer, or homooligomer. Interacts with SIRPA and SH2D3C. Interacts with ARHGAP10. Interacts with DLG4. Interacts with KCNA2. Interacts with NPHP1, ASAP1, ASAP2, ARHGAP26, SKAP2 and TGFB1I1. The Tyr-402 phosphorylated form interacts with SRC (via SH2 domain) and SRC family members. Forms a signaling complex with EPHA1, LCK and phosphatidylinositol 3-kinase; upon activation by EFNA1. Interacts with GRB2 (via SH2 domain). Interacts with P53/TP53 and MDM2. Interacts with MYLK. Interacts with BCAR1. Interacts with PDPK1. Interacts (hypophosphorylated) with PXN. Interacts with RB1CC1. Interacts with RHOU. Interacts with VAV1. Interacts with LPXN and PTPN12. In terms of processing, phosphorylated on tyrosine residues in response to various stimuli that elevate the intracellular calcium concentration; this activation is indirect and may be mediated by production of reactive oxygen species (ROS). Tyr-402 is the major autophosphorylation site, but other kinases can also phosphorylate Tyr-402. Autophosphorylation occurs in trans, i.e. one subunit of the dimeric receptor phosphorylates tyrosine residues on the other subunit. Phosphorylation at Tyr-402 promotes interaction with SRC and SRC family members, leading to phosphorylation at Tyr-579; Tyr-580 and Tyr-881. Phosphorylation at Tyr-881 is important for interaction with GRB2. Phosphorylated on tyrosine residues upon activation of FGR and PKC. Recruitment by NPHP1 to cell matrix adhesions initiates Tyr-402 phosphorylation. In monocytes, adherence to substrata is required for tyrosine phosphorylation and kinase activation. Angiotensin II, thapsigargin and L-alpha-lysophosphatidic acid (LPA) also induce autophosphorylation and increase kinase activity. Phosphorylation by MYLK promotes ITGB2 activation and is thus essential to trigger neutrophil transmigration during lung injury. Dephosphorylated by PTPN12. In terms of tissue distribution, most abundant in the brain, with highest levels in amygdala and hippocampus. Low levels in kidney (at protein level). Also expressed in spleen and lymphocytes.

It localises to the cytoplasm. It is found in the perinuclear region. Its subcellular location is the cell membrane. The protein resides in the cell junction. The protein localises to the focal adhesion. It localises to the cell projection. It is found in the lamellipodium. Its subcellular location is the cell cortex. The protein resides in the nucleus. The enzyme catalyses L-tyrosyl-[protein] + ATP = O-phospho-L-tyrosyl-[protein] + ADP + H(+). With respect to regulation, activated in response to stimuli that lead to increased intracellular Ca(2+) levels; this activation is indirect and may be mediated by calcium-mediated production of reactive oxygen species (ROS). Activated by autophosphorylation at Tyr-402; this creates a binding site for SRC family kinases and leads to phosphorylation at additional tyrosine residues. Phosphorylation at Tyr-402, Tyr-579 and Tyr-580 is required for optimal kinase activity. Inhibited by PF-562,271, BIRB796, PF-4618433 and by PF-431396, PF-2318841 and their derivatives. Inhibited by sulfoximine-substituted trifluoromethylpyrimidines. Inhibited by 4-amino and 5-aryl substituted pyridinone compounds. Non-receptor protein-tyrosine kinase that regulates reorganization of the actin cytoskeleton, cell polarization, cell migration, adhesion, spreading and bone remodeling. Plays a role in the regulation of the humoral immune response, and is required for normal levels of marginal B-cells in the spleen and normal migration of splenic B-cells. Required for normal macrophage polarization and migration towards sites of inflammation. Regulates cytoskeleton rearrangement and cell spreading in T-cells, and contributes to the regulation of T-cell responses. Promotes osteoclastic bone resorption; this requires both PTK2B/PYK2 and SRC. May inhibit differentiation and activity of osteoprogenitor cells. Functions in signaling downstream of integrin and collagen receptors, immune receptors, G-protein coupled receptors (GPCR), cytokine, chemokine and growth factor receptors, and mediates responses to cellular stress. Forms multisubunit signaling complexes with SRC and SRC family members upon activation; this leads to the phosphorylation of additional tyrosine residues, creating binding sites for scaffold proteins, effectors and substrates. Regulates numerous signaling pathways. Promotes activation of phosphatidylinositol 3-kinase and of the AKT1 signaling cascade. Promotes activation of NOS3. Regulates production of the cellular messenger cGMP. Promotes activation of the MAP kinase signaling cascade, including activation of MAPK1/ERK2, MAPK3/ERK1 and MAPK8/JNK1. Promotes activation of Rho family GTPases, such as RHOA and RAC1. Recruits the ubiquitin ligase MDM2 to P53/TP53 in the nucleus, and thereby regulates P53/TP53 activity, P53/TP53 ubiquitination and proteasomal degradation. Acts as a scaffold, binding to both PDPK1 and SRC, thereby allowing SRC to phosphorylate PDPK1 at 'Tyr-9, 'Tyr-373', and 'Tyr-376'. Promotes phosphorylation of NMDA receptors by SRC family members, and thereby contributes to the regulation of NMDA receptor ion channel activity and intracellular Ca(2+) levels. May also regulate potassium ion transport by phosphorylation of potassium channel subunits. Phosphorylates SRC; this increases SRC kinase activity. Phosphorylates ASAP1, NPHP1, KCNA2 and SHC1. Promotes phosphorylation of ASAP2, RHOU and PXN; this requires both SRC and PTK2/PYK2. The protein is Protein-tyrosine kinase 2-beta (PTK2B) of Homo sapiens (Human).